The following is an 805-amino-acid chain: Kinesin-like protein KIP3 (805 aa).

The region spanning 10 to 438 is the Kinesin motor domain; sequence SIVVAIRVRP…LKYANRAKEI (429 aa). An ATP-binding site is contributed by 192–199; it reads GATGCGKT. Residues 449–481 adopt a coiled-coil conformation; the sequence is LSRHVGSYLKMITEQKRQIEELREREEKMISLK. The disordered stretch occupies residues 720–805; that stretch reads NFSQKKVKWT…HQSLLATARK (86 aa). Positions 764–773 are enriched in polar residues; the sequence is MQDTTFNEQG. Residues 774–783 are compositionally biased toward low complexity; sequence PSTPSAPTTA. Residues 792–805 are compositionally biased toward polar residues; it reads SLLTHQSLLATARK.

Belongs to the TRAFAC class myosin-kinesin ATPase superfamily. Kinesin family. Kinesin II subfamily.

The protein localises to the cytoplasm. It localises to the cytoskeleton. The protein is Kinesin-like protein KIP3 (KIP3) of Saccharomyces cerevisiae (strain ATCC 204508 / S288c) (Baker's yeast).